The sequence spans 224 residues: UPF0758 protein LCA_0852 (224 aa).

Residues 100–222 (VVASSQMVGQ…YLSLREEGYL (123 aa)) form the MPN domain. Histidine 171, histidine 173, and aspartate 184 together coordinate Zn(2+). The JAMM motif motif lies at 171–184 (HNHPSGQLAPSTQD).

It belongs to the UPF0758 family.

This is UPF0758 protein LCA_0852 from Latilactobacillus sakei subsp. sakei (strain 23K) (Lactobacillus sakei subsp. sakei).